We begin with the raw amino-acid sequence, 220 residues long: Ribose-5-phosphate isomerase A (220 aa).

Residues 25 to 28, 80 to 83, and 93 to 96 contribute to the substrate site; these read TGST, DGAD, and KGGG. The active-site Proton acceptor is the E102. K120 provides a ligand contact to substrate.

This sequence belongs to the ribose 5-phosphate isomerase family. In terms of assembly, homodimer.

The catalysed reaction is aldehydo-D-ribose 5-phosphate = D-ribulose 5-phosphate. The protein operates within carbohydrate degradation; pentose phosphate pathway; D-ribose 5-phosphate from D-ribulose 5-phosphate (non-oxidative stage): step 1/1. In terms of biological role, catalyzes the reversible conversion of ribose-5-phosphate to ribulose 5-phosphate. The polypeptide is Ribose-5-phosphate isomerase A (Bacillus anthracis).